A 533-amino-acid polypeptide reads, in one-letter code: Phosphoenolpyruvate carboxykinase (ATP) (533 aa).

Positions 59, 199, and 205 each coordinate substrate. ATP contacts are provided by residues Lys-205, His-224, and 240–248 (GLSGTGKTT). Residues Lys-205 and His-224 each contribute to the Mn(2+) site. A Mn(2+)-binding site is contributed by Asp-261. ATP is bound by residues Glu-289, Arg-325, 441–442 (RI), and Thr-447. Residue Arg-325 coordinates substrate.

This sequence belongs to the phosphoenolpyruvate carboxykinase (ATP) family. In terms of assembly, monomer. Requires Mn(2+) as cofactor.

It localises to the cytoplasm. The catalysed reaction is oxaloacetate + ATP = phosphoenolpyruvate + ADP + CO2. The protein operates within carbohydrate biosynthesis; gluconeogenesis. Functionally, involved in the gluconeogenesis. Catalyzes the conversion of oxaloacetate (OAA) to phosphoenolpyruvate (PEP) through direct phosphoryl transfer between the nucleoside triphosphate and OAA. The sequence is that of Phosphoenolpyruvate carboxykinase (ATP) from Idiomarina loihiensis (strain ATCC BAA-735 / DSM 15497 / L2-TR).